A 359-amino-acid polypeptide reads, in one-letter code: MQERVKTKKIFVGDVAIGGDAPISVQSMTFSKTADIGATKAQIDRLALAGCDIVRVAVSDHEDANALKELKRLSPLPLVADIHFRYKLALIAAQSVDCIRINPGNIGSKEKIKAVADACAERGIPIRIGVNGGSLEEMFEQKYGATPRGMVESALYNIKLLEDFGFANIKVSLKASDVERTVLAYRELRPLVEYPFHLGVTEAGTLFHSMIKSSMALGGLLLEGIGDTMRVSITGELEQEVEVARAILKYSGRQKEGVYLISCPTCGRIEADLVSAVKRVEERVKHIRAPLQISVMGCAVNALGEAKHADIAIAFGRGDGLIIKKGEILCKLPEEELVDRLVEEAEKLEREYLEDSFKN.

Residues C263, C266, C298, and E305 each contribute to the [4Fe-4S] cluster site.

Belongs to the IspG family. Requires [4Fe-4S] cluster as cofactor.

It catalyses the reaction (2E)-4-hydroxy-3-methylbut-2-enyl diphosphate + oxidized [flavodoxin] + H2O + 2 H(+) = 2-C-methyl-D-erythritol 2,4-cyclic diphosphate + reduced [flavodoxin]. It participates in isoprenoid biosynthesis; isopentenyl diphosphate biosynthesis via DXP pathway; isopentenyl diphosphate from 1-deoxy-D-xylulose 5-phosphate: step 5/6. Functionally, converts 2C-methyl-D-erythritol 2,4-cyclodiphosphate (ME-2,4cPP) into 1-hydroxy-2-methyl-2-(E)-butenyl 4-diphosphate. In Wolinella succinogenes (strain ATCC 29543 / DSM 1740 / CCUG 13145 / JCM 31913 / LMG 7466 / NCTC 11488 / FDC 602W) (Vibrio succinogenes), this protein is 4-hydroxy-3-methylbut-2-en-1-yl diphosphate synthase (flavodoxin).